Here is a 261-residue protein sequence, read N- to C-terminus: Thiamine thiazole synthase (261 aa).

Residues Ser40, 59–60 (ER), Gly67, Val133, and 159–161 (HID) contribute to the NAD(+) site. Asp161 and His176 together coordinate Fe cation. Ser179 and Met226 together coordinate NAD(+). Position 236 (Arg236) interacts with glycine.

The protein belongs to the THI4 family. In terms of assembly, homooctamer; tetramer of dimers. It depends on Fe(2+) as a cofactor.

The enzyme catalyses hydrogen sulfide + glycine + NAD(+) = ADP-5-ethyl-4-methylthiazole-2-carboxylate + nicotinamide + 3 H2O + H(+). It functions in the pathway cofactor biosynthesis; thiamine diphosphate biosynthesis. Its function is as follows. Involved in the biosynthesis of the thiazole moiety of thiamine. Catalyzes the conversion of NAD and glycine to adenosine diphosphate 5-(2-hydroxyethyl)-4-methylthiazole-2-carboxylate (ADT), an adenylated thiazole intermediate, using free sulfide as a source of sulfur. The polypeptide is Thiamine thiazole synthase (Methanococcus maripaludis (strain C6 / ATCC BAA-1332)).